Here is a 222-residue protein sequence, read N- to C-terminus: Cytidylate kinase (222 aa).

ATP is bound at residue 10 to 18 (GPSASGKGT).

This sequence belongs to the cytidylate kinase family. Type 1 subfamily.

The protein resides in the cytoplasm. It carries out the reaction CMP + ATP = CDP + ADP. The enzyme catalyses dCMP + ATP = dCDP + ADP. The sequence is that of Cytidylate kinase from Chromobacterium violaceum (strain ATCC 12472 / DSM 30191 / JCM 1249 / CCUG 213 / NBRC 12614 / NCIMB 9131 / NCTC 9757 / MK).